The following is a 411-amino-acid chain: MSDSVILALGIAAFTVIVLVLVAIILFAKSKLVDSGDITIDINDDPEKAITLPAGGKLLGALASKGIFVSSACGGGGSCGQCIVKVKNGGGEILPTELSHINKREAKEGYRLACQVNVKGNMEVELPEEIFGVKKWECTVISNDNKATFIKELKLAIPEGEEVPFRAGGYIQIEAEPHVVNYKDFDIPEEYHEDWDKYDLWRYVSKVDEHIIRAYSMASYPEEKGIIMLNVRIATPPPRQPDAPPGQMSSYIWSLKAGDKVTISGPFGEFFAKETNAEMVFIGGGAGMAPMRSHIFDQLKRLHSKRKMSFWYGARSKREIFYQEDFDQLQAENPNFVWHVALSDALPEDNWTGYTGFIHNVLYENYLKNHEAPEDCEYYMCGPPVMNAAVIKMLKDLGVEDENILLDDFGG.

Residues 5 to 25 traverse the membrane as a helical segment; sequence VILALGIAAFTVIVLVLVAII. A 2Fe-2S ferredoxin-type domain is found at 36–130; that stretch reads GDITIDINDD…NMEVELPEEI (95 aa). The [2Fe-2S] cluster site is built by C73, C79, C82, and C114. Residues 133–273 form the FAD-binding FR-type domain; sequence VKKWECTVIS…SGPFGEFFAK (141 aa).

It belongs to the NqrF family. In terms of assembly, composed of six subunits; NqrA, NqrB, NqrC, NqrD, NqrE and NqrF. Requires [2Fe-2S] cluster as cofactor. FAD is required as a cofactor.

The protein localises to the cell inner membrane. The enzyme catalyses a ubiquinone + n Na(+)(in) + NADH + H(+) = a ubiquinol + n Na(+)(out) + NAD(+). In terms of biological role, NQR complex catalyzes the reduction of ubiquinone-1 to ubiquinol by two successive reactions, coupled with the transport of Na(+) ions from the cytoplasm to the periplasm. The first step is catalyzed by NqrF, which accepts electrons from NADH and reduces ubiquinone-1 to ubisemiquinone by a one-electron transfer pathway. This Haemophilus influenzae (strain 86-028NP) protein is Na(+)-translocating NADH-quinone reductase subunit F.